The chain runs to 434 residues: UPF0597 protein CLD_2616 (434 aa).

It belongs to the UPF0597 family.

The protein is UPF0597 protein CLD_2616 of Clostridium botulinum (strain Okra / Type B1).